Here is a 165-residue protein sequence, read N- to C-terminus: 6,7-dimethyl-8-ribityllumazine synthase (165 aa).

5-amino-6-(D-ribitylamino)uracil is bound by residues tryptophan 26, 57-59 (SVE), and 79-81 (VVV). (2S)-2-hydroxy-3-oxobutyl phosphate is bound at residue 84–85 (AT). Histidine 87 functions as the Proton donor in the catalytic mechanism. A 5-amino-6-(D-ribitylamino)uracil-binding site is contributed by histidine 112. Residue arginine 126 participates in (2S)-2-hydroxy-3-oxobutyl phosphate binding.

Belongs to the DMRL synthase family.

The catalysed reaction is (2S)-2-hydroxy-3-oxobutyl phosphate + 5-amino-6-(D-ribitylamino)uracil = 6,7-dimethyl-8-(1-D-ribityl)lumazine + phosphate + 2 H2O + H(+). It participates in cofactor biosynthesis; riboflavin biosynthesis; riboflavin from 2-hydroxy-3-oxobutyl phosphate and 5-amino-6-(D-ribitylamino)uracil: step 1/2. Functionally, catalyzes the formation of 6,7-dimethyl-8-ribityllumazine by condensation of 5-amino-6-(D-ribitylamino)uracil with 3,4-dihydroxy-2-butanone 4-phosphate. This is the penultimate step in the biosynthesis of riboflavin. This is 6,7-dimethyl-8-ribityllumazine synthase from Salinispora arenicola (strain CNS-205).